The primary structure comprises 196 residues: Crossover junction endodeoxyribonuclease RuvC (196 aa).

Active-site residues include aspartate 19, glutamate 80, and aspartate 153. Residues aspartate 19, glutamate 80, and aspartate 153 each contribute to the Mg(2+) site.

The protein belongs to the RuvC family. Homodimer which binds Holliday junction (HJ) DNA. The HJ becomes 2-fold symmetrical on binding to RuvC with unstacked arms; it has a different conformation from HJ DNA in complex with RuvA. In the full resolvosome a probable DNA-RuvA(4)-RuvB(12)-RuvC(2) complex forms which resolves the HJ. Mg(2+) is required as a cofactor.

It is found in the cytoplasm. It catalyses the reaction Endonucleolytic cleavage at a junction such as a reciprocal single-stranded crossover between two homologous DNA duplexes (Holliday junction).. Its function is as follows. The RuvA-RuvB-RuvC complex processes Holliday junction (HJ) DNA during genetic recombination and DNA repair. Endonuclease that resolves HJ intermediates. Cleaves cruciform DNA by making single-stranded nicks across the HJ at symmetrical positions within the homologous arms, yielding a 5'-phosphate and a 3'-hydroxyl group; requires a central core of homology in the junction. The consensus cleavage sequence is 5'-(A/T)TT(C/G)-3'. Cleavage occurs on the 3'-side of the TT dinucleotide at the point of strand exchange. HJ branch migration catalyzed by RuvA-RuvB allows RuvC to scan DNA until it finds its consensus sequence, where it cleaves and resolves the cruciform DNA. The chain is Crossover junction endodeoxyribonuclease RuvC from Cutibacterium acnes (strain DSM 16379 / KPA171202) (Propionibacterium acnes).